The following is a 340-amino-acid chain: CMP-sialic acid transporter 1 (340 aa).

At 1-5 the chain is on the cytoplasmic side; the sequence is MAATP. The helical transmembrane segment at 6-26 threads the bilayer; the sequence is WYFVAVLLTILTSSQGILTTL. At 27–36 the chain is on the lumenal side; that stretch reads SQSDGGYKYD. The helical transmembrane segment at 37 to 57 threads the bilayer; sequence YATVPFLAEVFKLIISGLFLW. Over 58–78 the chain is Cytoplasmic; it reads REMRTSSSTTSRITTDWKSVR. The helical transmembrane segment at 79–99 threads the bilayer; the sequence is LFVIPSLIYLIHNNVQFATLT. The Lumenal segment spans residues 100–102; it reads YVD. The helical transmembrane segment at 103–125 threads the bilayer; the sequence is TSTYQIMGNLKIVTTGILFRLFL. The Cytoplasmic portion of the chain corresponds to 126-168; that stretch reads KRKLSKLQWMAIGLLAVGTTTSQVKGCGEASCDSLFTAPIQGY. The helical transmembrane segment at 169-189 threads the bilayer; sequence LLGILSAGLSALAGIYTEFLM. Residues 190-200 are Lumenal-facing; sequence KRNNDTLYWQN. The chain crosses the membrane as a helical span at residues 201–217; sequence LQLYTFGSLFNVARLIA. Residues 218-238 are Cytoplasmic-facing; that stretch reads DDFRHGFEKGPWWQRIFDGYS. Residues 239–259 traverse the membrane as a helical segment; that stretch reads ITTWLVVLNLGSTGLLVSWLM. The Lumenal segment spans residues 260–282; it reads KYADNIVKVYSTSMAMLLTMVAS. A helical membrane pass occupies residues 283 to 303; that stretch reads IYLFSFKPTLQLFLGIVICIM. Over 304–340 the chain is Cytoplasmic; that stretch reads SLHMYFAPPHTLVDLPVTNEAHAKTLKQVVVEEKTDS.

The protein belongs to the nucleotide-sugar transporter family. CMP-Sialate:CMP antiporter (TC 2.A.7.12) subfamily.

The protein resides in the golgi apparatus membrane. In terms of biological role, essential protein. Sugar transporter involved in the transport of CMP-sialic acid from the cytoplasm into the Golgi. This is CMP-sialic acid transporter 1 from Arabidopsis thaliana (Mouse-ear cress).